The primary structure comprises 319 residues: L-threo-3-hydroxyaspartate ammonia-lyase (319 aa).

Residue K53 is modified to N6-(pyridoxal phosphate)lysine. Pyridoxal 5'-phosphate-binding positions include N80, 179–183 (GGGGM), and T304.

Belongs to the serine/threonine dehydratase family. May be either a monomer or a homodimer. Pyridoxal 5'-phosphate serves as cofactor. Requires Mn(2+) as cofactor. It depends on Mg(2+) as a cofactor. The cofactor is Ca(2+).

The enzyme catalyses (3S)-3-hydroxy-L-aspartate = oxaloacetate + NH4(+). Is strongly inhibited by hydroxylamine and EDTA in vitro. In terms of biological role, catalyzes the deamination of L-threo-3-hydroxyaspartate to oxaloacetate and ammonia. Shows a high specificity towards L-threo-3-hydroxyaspartate as other 3-hydroxyaminoacids, i.e. D,L-erythro- and D-threo-3-hydroxyaspartate, D-threonine, L-threonine, D,L-allothreonine, D,L-threo-3-phenylserine, D-serine, and L-serine, are not substrates for this enzyme. Exhibits no detectable serine and aspartate racemase activity. Might play a role in the detoxification of naturally occurring 3-hydroxyaspartate in Pseudomonas sp. T62 cells. This Pseudomonas sp protein is L-threo-3-hydroxyaspartate ammonia-lyase.